The following is a 479-amino-acid chain: Anaerobic nitric oxide reductase flavorubredoxin (479 aa).

The segment at 30–210 (LRGSSYNSYL…PFSRLVTPKI (181 aa)) is zinc metallo-hydrolase. 6 residues coordinate Fe cation: H79, E81, D83, H147, D166, and H227. The region spanning 254–393 (ITIFYDTMSN…LCREHGREIA (140 aa)) is the Flavodoxin-like domain. Residues 260 to 264 (TMSNN) and 342 to 369 (AFGS…EMSL) contribute to the FMN site. The Rubredoxin-like domain occupies 423-474 (GPRMQCSVCQWIYDPAKGEPMQDVAPGTPWSEVPDNFLCPECSLGKDVFDEL). 4 residues coordinate Fe cation: C428, C431, C461, and C464.

In the N-terminal section; belongs to the zinc metallo-hydrolase group 3 family. In terms of assembly, homotetramer. The cofactor is Fe cation. Requires FMN as cofactor.

The protein resides in the cytoplasm. It functions in the pathway nitrogen metabolism; nitric oxide reduction. In terms of biological role, anaerobic nitric oxide reductase; uses NADH to detoxify nitric oxide (NO), protecting several 4Fe-4S NO-sensitive enzymes. Has at least 2 reductase partners, only one of which (NorW, flavorubredoxin reductase) has been identified. NO probably binds to the di-iron center; electrons enter from the NorW at rubredoxin and are transferred sequentially to the FMN center and the di-iron center. Also able to function as an aerobic oxygen reductase. This is Anaerobic nitric oxide reductase flavorubredoxin from Escherichia coli (strain SMS-3-5 / SECEC).